A 212-amino-acid chain; its full sequence is Imidazole glycerol phosphate synthase subunit HisH (212 aa).

The region spanning 3-212 (TVAVIDYGMG…QNFAAWDGRW (210 aa)) is the Glutamine amidotransferase type-1 domain. C81 functions as the Nucleophile in the catalytic mechanism. Residues H190 and E192 contribute to the active site.

As to quaternary structure, heterodimer of HisH and HisF.

Its subcellular location is the cytoplasm. It carries out the reaction 5-[(5-phospho-1-deoxy-D-ribulos-1-ylimino)methylamino]-1-(5-phospho-beta-D-ribosyl)imidazole-4-carboxamide + L-glutamine = D-erythro-1-(imidazol-4-yl)glycerol 3-phosphate + 5-amino-1-(5-phospho-beta-D-ribosyl)imidazole-4-carboxamide + L-glutamate + H(+). The catalysed reaction is L-glutamine + H2O = L-glutamate + NH4(+). Its pathway is amino-acid biosynthesis; L-histidine biosynthesis; L-histidine from 5-phospho-alpha-D-ribose 1-diphosphate: step 5/9. Functionally, IGPS catalyzes the conversion of PRFAR and glutamine to IGP, AICAR and glutamate. The HisH subunit catalyzes the hydrolysis of glutamine to glutamate and ammonia as part of the synthesis of IGP and AICAR. The resulting ammonia molecule is channeled to the active site of HisF. The chain is Imidazole glycerol phosphate synthase subunit HisH from Pseudomonas syringae pv. syringae (strain B728a).